Here is a 714-residue protein sequence, read N- to C-terminus: Fatty acid oxidation complex subunit alpha (714 aa).

An enoyl-CoA hydratase region spans residues 1–190 (MDTVSAFKLE…KAGLVDEVVP (190 aa)). A 3-hydroxyacyl-CoA dehydrogenase region spans residues 306–714 (GSLRSVAVLG…TFWPADERLT (409 aa)).

This sequence in the N-terminal section; belongs to the enoyl-CoA hydratase/isomerase family. In the central section; belongs to the 3-hydroxyacyl-CoA dehydrogenase family. In terms of assembly, heterotetramer of two alpha chains (FadJ) and two beta chains (FadI).

The protein resides in the cytoplasm. It catalyses the reaction a (3S)-3-hydroxyacyl-CoA = a (2E)-enoyl-CoA + H2O. The enzyme catalyses a 4-saturated-(3S)-3-hydroxyacyl-CoA = a (3E)-enoyl-CoA + H2O. It carries out the reaction a (3S)-3-hydroxyacyl-CoA + NAD(+) = a 3-oxoacyl-CoA + NADH + H(+). The catalysed reaction is (3S)-3-hydroxybutanoyl-CoA = (3R)-3-hydroxybutanoyl-CoA. It functions in the pathway lipid metabolism; fatty acid beta-oxidation. Functionally, catalyzes the formation of a hydroxyacyl-CoA by addition of water on enoyl-CoA. Also exhibits 3-hydroxyacyl-CoA epimerase and 3-hydroxyacyl-CoA dehydrogenase activities. The polypeptide is Fatty acid oxidation complex subunit alpha (Klebsiella pneumoniae subsp. pneumoniae (strain ATCC 700721 / MGH 78578)).